We begin with the raw amino-acid sequence, 216 residues long: Chloramphenicol acetyltransferase (216 aa).

The active-site Proton acceptor is His186.

It belongs to the chloramphenicol acetyltransferase family. Homotrimer.

The catalysed reaction is chloramphenicol + acetyl-CoA = chloramphenicol 3-acetate + CoA. In terms of biological role, this enzyme is an effector of chloramphenicol resistance in bacteria. The sequence is that of Chloramphenicol acetyltransferase (cat) from Vibrio anguillarum (Listonella anguillarum).